The chain runs to 171 residues: 3-hydroxydecanoyl-[acyl-carrier-protein] dehydratase (171 aa).

His-71 is an active-site residue.

Belongs to the thioester dehydratase family. FabA subfamily. As to quaternary structure, homodimer.

Its subcellular location is the cytoplasm. It carries out the reaction a (3R)-hydroxyacyl-[ACP] = a (2E)-enoyl-[ACP] + H2O. The catalysed reaction is (3R)-hydroxydecanoyl-[ACP] = (2E)-decenoyl-[ACP] + H2O. It catalyses the reaction (2E)-decenoyl-[ACP] = (3Z)-decenoyl-[ACP]. The protein operates within lipid metabolism; fatty acid biosynthesis. Functionally, necessary for the introduction of cis unsaturation into fatty acids. Catalyzes the dehydration of (3R)-3-hydroxydecanoyl-ACP to E-(2)-decenoyl-ACP and then its isomerization to Z-(3)-decenoyl-ACP. Can catalyze the dehydratase reaction for beta-hydroxyacyl-ACPs with saturated chain lengths up to 16:0, being most active on intermediate chain length. In Sinorhizobium medicae (strain WSM419) (Ensifer medicae), this protein is 3-hydroxydecanoyl-[acyl-carrier-protein] dehydratase.